The primary structure comprises 505 residues: MAIPNIRIPCRQLFIDGEWREPLKKNRLPIINPANEEIIGYIPAATEEDVDMAVKAARSALRRDDWGSTTGAQRAKYLRAIAAKVLEKKPELATLETIDNGKPWFEAASDIDDVVACFEYYADLAEALDSKKQTEVKLHLDSFKTHVLREPLGVVGLITPWNYPLLMTTWKVAPALAAGCAAILKPSELASITSLELGEICREVGLPPGALSILTGLGHEAGSPLVSHPDVDKIAFTGSGPTGVKIMTAAAQLVKPVTLELGGKSPIVVFDDIHNLDTAVEWTLFGCFWTNGQICSATSRLIIQETIAPQFLARLLEWTKNIKISDPLEEDCKLGPVISRGQYEKILKFISTAKDEGATILYGGDRPEHLKKGYYIQPTIITDVDTSMEIWKEEVFGPVLCVKTFKIEEEAIELANDTKFGLGAAILSKDLERCERFTKAFQSGIVWINCSQPCFWQPPWGGKKRSGFGRELGEWSLENYLNIKQVTQYVTPDEPWAFYKSPSKL.

Isoleucine 31 and aspartate 99 together coordinate Na(+). NAD(+) is bound by residues 159–161 and 185–188; these read TPW and KPSE. A Na(+)-binding site is contributed by leucine 189. 238-242 lines the NAD(+) pocket; it reads GSGPT. Glutamate 260 acts as the Proton acceptor in catalysis. Leucine 261 contacts NAD(+). Cysteine 295 serves as the catalytic Nucleophile. NAD(+)-binding residues include glutamate 394 and tryptophan 460.

Belongs to the aldehyde dehydrogenase family. In terms of assembly, forms homodimers.

The enzyme catalyses 4-aminobutanal + NAD(+) + H2O = 4-aminobutanoate + NADH + 2 H(+). It carries out the reaction 3-aminopropanal + NAD(+) + H2O = beta-alanine + NADH + 2 H(+). It catalyses the reaction 4-(trimethylamino)butanal + NAD(+) + H2O = 4-(trimethylamino)butanoate + NADH + 2 H(+). The catalysed reaction is 4-guanidinobutanal + NAD(+) + H2O = 4-guanidinobutanoate + NADH + 2 H(+). It participates in amine and polyamine biosynthesis; betaine biosynthesis via choline pathway; betaine from betaine aldehyde: step 1/1. Dehydrogenase that catalyzes the oxidation of several aminoaldehydes. Metabolizes and detoxifies aldehyde products of polyamine degradation to non-toxic amino acids. Catalyzes the oxidation of 4-aminobutanal and 3-aminopropanal to 4-aminobutanoate and beta-alanine, respectively. Catalyzes the oxidation of 4-(trimethylamino)butanal and 4-guanidinobutanal to 4-trimethylammoniobutanoate and 4-guanidinobutanoate, respectively. This is Aminoaldehyde dehydrogenase 2 from Solanum lycopersicum (Tomato).